A 1079-amino-acid chain; its full sequence is Translation initiation factor IF-2 (1079 aa).

Composition is skewed to basic and acidic residues over residues 52–65 (VQAQ…KEGN), 75–90 (RDGD…KAPE), and 102–134 (APER…KEPQ). Residues 52–488 (VQAQRDGGAR…RGKKDVRPAA (437 aa)) are disordered. Residues 150–184 (APVAKVVEAAPAETPAPEAPAVKATVTAEAAPAKT) show a composition bias toward low complexity. The segment covering 185-194 (VEPESERPQA) has biased composition (basic and acidic residues). Over residues 276–291 (AAVAQQQMQQQAAQQQ) the composition is skewed to low complexity. The span at 306-327 (GGYRPEGQREGGYRPEGQREGG) shows a compositional bias: basic and acidic residues. Low complexity-rich tracts occupy residues 348-370 (EGGY…GPRP) and 380-398 (PGAP…APRP). A compositionally biased stretch (gly residues) spans 419 to 429 (PRPGGFGGAPG). The span at 461–471 (PRGRSDDDVMR) shows a compositional bias: basic and acidic residues. Basic residues predominate over residues 473–482 (PRGRGKRGKK). In terms of domain architecture, tr-type G spans 578–745 (TRPPVVTIMG…LIAIQAEILE (168 aa)). Positions 587–594 (GHVDHGKT) are G1. GTP is bound at residue 587–594 (GHVDHGKT). A G2 region spans residues 612-616 (GITQH). The interval 633–636 (DTPG) is G3. Residues 633 to 637 (DTPGH) and 687 to 690 (NKMD) each bind GTP. The segment at 687 to 690 (NKMD) is G4. Residues 723–725 (SAK) form a G5 region.

This sequence belongs to the TRAFAC class translation factor GTPase superfamily. Classic translation factor GTPase family. IF-2 subfamily.

The protein resides in the cytoplasm. Functionally, one of the essential components for the initiation of protein synthesis. Protects formylmethionyl-tRNA from spontaneous hydrolysis and promotes its binding to the 30S ribosomal subunits. Also involved in the hydrolysis of GTP during the formation of the 70S ribosomal complex. This chain is Translation initiation factor IF-2, found in Nitratidesulfovibrio vulgaris (strain ATCC 29579 / DSM 644 / CCUG 34227 / NCIMB 8303 / VKM B-1760 / Hildenborough) (Desulfovibrio vulgaris).